Here is a 369-residue protein sequence, read N- to C-terminus: H-2 class I histocompatibility antigen, K-B alpha chain (369 aa).

The first 21 residues, 1-21 (MVPCTLLLLLAAALAPTQTRA), serve as a signal peptide directing secretion. The tract at residues 22–111 (GPHSLRYFVT…LLGYYNQSKG (90 aa)) is alpha-1. Topologically, residues 22-305 (GPHSLRYFVT…EPPPSTVSNM (284 aa)) are extracellular. N107 carries an N-linked (GlcNAc...) asparagine glycan. Residues 112-203 (GSHTIQVISG…KNGNATLLRT (92 aa)) are alpha-2. A disulfide bridge connects residues C122 and C185. N-linked (GlcNAc...) asparagine glycosylation is present at N197. The alpha-3 stretch occupies residues 204-295 (DSPKAHVTHH…GLPEPLTLRW (92 aa)). Residues 206–294 (PKAHVTHHSR…QGLPEPLTLR (89 aa)) enclose the Ig-like C1-type domain. A disulfide bond links C224 and C280. Residues 296-305 (EPPPSTVSNM) are connecting peptide. A helical membrane pass occupies residues 306–328 (ATVAVLVVLGAAIVTGAVVAFVM). The Cytoplasmic segment spans residues 329–369 (KMRRRNTGGKGGDYALAPGSQTSDLSLPDCKVMVHDPHSLA). A phosphoserine mark is found at S351 and S354.

This sequence belongs to the MHC class I family. As to quaternary structure, heterodimer of an alpha chain and a beta chain (beta-2-microglobulin).

Its subcellular location is the membrane. Involved in the presentation of foreign antigens to the immune system. The sequence is that of H-2 class I histocompatibility antigen, K-B alpha chain (H2-K1) from Mus musculus (Mouse).